A 131-amino-acid polypeptide reads, in one-letter code: Profilin (131 aa).

The protein belongs to the profilin family. In terms of assembly, occurs in many kinds of cells as a complex with monomeric actin in a 1:1 ratio.

The protein localises to the cytoplasm. Its subcellular location is the cytoskeleton. Functionally, binds to actin and affects the structure of the cytoskeleton. At high concentrations, profilin prevents the polymerization of actin, whereas it enhances it at low concentrations. By binding to PIP2, it inhibits the formation of IP3 and DG. This Fragaria ananassa (Strawberry) protein is Profilin.